Reading from the N-terminus, the 586-residue chain is Lamin-B1 (586 aa).

Residues 1–31 form a disordered region; sequence MATATPVPPRMGSRAGGPTTPLSPTRLSRLQ. The residue at position 2 (alanine 2) is an N-acetylalanine. Residues 2–34 form a head region; sequence ATATPVPPRMGSRAGGPTTPLSPTRLSRLQEKE. A phosphothreonine mark is found at threonine 3 and threonine 5. Arginine 14 carries the omega-N-methylarginine modification. Position 20 is a phosphothreonine (threonine 20). Serine 23 bears the Phosphoserine mark. Threonine 25 carries the post-translational modification Phosphothreonine. Serine 28 bears the Phosphoserine mark. The IF rod domain occupies 32-388; the sequence is EKEELRELND…KLLEGEEERL (357 aa). A coil 1A region spans residues 35–69; that stretch reads ELRELNDRLAVYIDKVRSLETENSALQLQVTEREE. The linker 1 stretch occupies residues 70 to 81; that stretch reads VRGRELTGLKAL. The interval 82-215 is coil 1B; it reads YETELADARR…EFRKSMYEEE (134 aa). Lysine 102 participates in a covalent cross-link: Glycyl lysine isopeptide (Lys-Gly) (interchain with G-Cter in SUMO2). Position 111 is an N6-acetyllysine (lysine 111). A Glycyl lysine isopeptide (Lys-Gly) (interchain with G-Cter in SUMO2) cross-link involves residue lysine 123. Serine 126 is modified (phosphoserine). Residue lysine 145 forms a Glycyl lysine isopeptide (Lys-Gly) (interchain with G-Cter in SUMO2) linkage. An N6-acetyllysine; alternate modification is found at lysine 157. A Glycyl lysine isopeptide (Lys-Gly) (interchain with G-Cter in SUMO2); alternate cross-link involves residue lysine 157. Serine 158 carries the post-translational modification Phosphoserine. A Glycyl lysine isopeptide (Lys-Gly) (interchain with G-Cter in SUMO2) cross-link involves residue lysine 181. Phosphoserine occurs at positions 200, 210, and 232. The segment at 216–243 is linker 2; it reads INETRRKHETRLVEVDSGRQIEYEYKLA. Residues lysine 241 and lysine 261 each participate in a glycyl lysine isopeptide (Lys-Gly) (interchain with G-Cter in SUMO2) cross-link. Residues 244–386 are coil 2; the sequence is QALHEMREQH…YRKLLEGEEE (143 aa). N6-acetyllysine; alternate is present on lysine 271. Residue lysine 271 forms a Glycyl lysine isopeptide (Lys-Gly) (interchain with G-Cter in SUMO2); alternate linkage. Serine 278 and serine 302 each carry phosphoserine. Residue lysine 312 forms a Glycyl lysine isopeptide (Lys-Gly) (interchain with G-Cter in SUMO2) linkage. Lysine 330 bears the N6-acetyllysine; alternate mark. Residue lysine 330 forms a Glycyl lysine isopeptide (Lys-Gly) (interchain with G-Cter in SUMO2); alternate linkage. 2 positions are modified to phosphoserine: serine 375 and serine 393. The tract at residues 387 to 586 is tail; it reads RLKLSPSPSS…RASNRSCAIM (200 aa). The disordered stretch occupies residues 388-432; the sequence is LKLSPSPSSRVTVSRASSSRSVRTTRGKRKRVDVEESEASSSVSI. Residues 390–409 show a composition bias toward low complexity; that stretch reads LSPSPSSRVTVSRASSSRSV. Threonine 399 carries an O-linked (GlcNAc) threonine glycan. The residue at position 413 (arginine 413) is an Omega-N-methylarginine. The Nuclear localization signal signature appears at 415-420; the sequence is KRKRVD. The LTD domain maps to 430–546; it reads VSISHSASAT…EEVAQRSTVF (117 aa). Lysine 483 carries the N6-acetyllysine modification. Lysine 532 is covalently cross-linked (Glycyl lysine isopeptide (Lys-Gly) (interchain with G-Cter in SUMO2)). A Phosphoserine modification is found at serine 534. Residue lysine 547 forms a Glycyl lysine isopeptide (Lys-Gly) (interchain with G-Cter in SUMO2) linkage. A Phosphothreonine modification is found at threonine 575. A Cysteine methyl ester modification is found at cysteine 583. Cysteine 583 is lipidated: S-farnesyl cysteine. A propeptide spans 584–586 (removed in mature form); it reads AIM.

This sequence belongs to the intermediate filament family. Homodimer. Lamin dimers then assemble into dimeric head-to-tail polymers. Ultimately, two head-to-tail polymers assemble laterally into a protofilament with a uniformly shaped rod of 3.5 nm in diameter. Interacts with SPAG4 and SEPT12. Post-translationally, B-type lamins undergo a series of modifications, such as farnesylation and phosphorylation. Increased phosphorylation of the lamins occurs before envelope disintegration and probably plays a role in regulating lamin associations. Phosphorylation plays a key role in lamin organization, subcellular localization and nuclear envelope disintegration. Phosphorylation by CDK1 at Ser-23 and Ser-393 at the onset of mitosis drives lamin disassembly and nuclear envelope breakdown.

The protein resides in the nucleus lamina. Lamins are intermediate filament proteins that assemble into a filamentous meshwork, and which constitute the major components of the nuclear lamina, a fibrous layer on the nucleoplasmic side of the inner nuclear membrane. Lamins provide a framework for the nuclear envelope, bridging the nuclear envelope and chromatin, thereby playing an important role in nuclear assembly, chromatin organization, nuclear membrane and telomere dynamics. The structural integrity of the lamina is strictly controlled by the cell cycle, as seen by the disintegration and formation of the nuclear envelope in prophase and telophase, respectively. This chain is Lamin-B1 (LMNB1), found in Homo sapiens (Human).